Here is a 459-residue protein sequence, read N- to C-terminus: FAD-dependent monooxygenase nanF (459 aa).

FAD is bound by residues glutamate 49, glycine 62, and arginine 121. Catalysis depends on residues arginine 200 and tyrosine 230. 2 residues coordinate FAD: aspartate 327 and glycine 340.

This sequence belongs to the paxM FAD-dependent monooxygenase family. FAD is required as a cofactor.

The protein operates within secondary metabolite biosynthesis. Its function is as follows. FAD-dependent monooxygenase; part of the gene cluster that mediates the biosynthesis of the benzazepine alkaloid nanangelenin A which contains an unprecedented 3,4-dihydro-1-benzazepine-2,5-dione-N-prenyl-N-acetoxy-anthranilamide scaffold. The first step of nanangelenin biosynthesis is catalyzed by the indoleamine 2,3-dioxygenase nanC which produces N-formyl-kynurenine through the catabolism of tryptophan. The two-module NRPS nanA then utilizes anthranilate (Ant) and L-kynurenine (L-Kyn) to assemble the dipeptide product nanangelenin B. The first adenylation domain of nanA (A1) loads anthranilate onto the T1 domain, while A2 loads kynurenine, generated through spontaneous nonenzymatic deformylation of the nanC-supplied N-formyl-kynurenine. The peptide bond formation between the tethered amino acids is catalyzed by the first condensation domain (C1) between anthranilate's carbonyl carbon and kynurenine's aliphatic primary amine. The second C domain (C2) catalyzes the final cyclization event between the aromatic amine of kynurenine and the tethered carbonyl carbon, yielding nanangelenin B. The terminal T3 domain enhances the catalytic efficiency of C2, suggesting the T2-tethered Ant-L-Kyn is transferred to T3 prior to cyclization by C2. Once released from nanA, nanangelenin B is then prenylated by the prenyltransferase nanD to form nanangelenin C. Nanangelenin C is then N-hydroxylated by the FAD-dependent monooxygenase nanF and further acetylated by the acetyltransferase nanB to yield nanangelenin F. Finally, the N-methyltransferase nanE methylates the amide nitrogen of 1-benzazepine to convert nanangelenin F into nanangelenin A. NanE is also able to methylate most of the intermediates of the pathway such as nanangelenin B and nanangelenin C to produce nanangelenin D and nanangelenin E, respectively. The sequence is that of FAD-dependent monooxygenase nanF from Aspergillus nanangensis.